Consider the following 158-residue polypeptide: Transcription elongation factor GreA (158 aa).

This sequence belongs to the GreA/GreB family.

In terms of biological role, necessary for efficient RNA polymerase transcription elongation past template-encoded arresting sites. The arresting sites in DNA have the property of trapping a certain fraction of elongating RNA polymerases that pass through, resulting in locked ternary complexes. Cleavage of the nascent transcript by cleavage factors such as GreA or GreB allows the resumption of elongation from the new 3'terminus. GreA releases sequences of 2 to 3 nucleotides. The chain is Transcription elongation factor GreA from Wigglesworthia glossinidia brevipalpis.